The following is an 89-amino-acid chain: Small ribosomal subunit protein uS15 (89 aa).

The protein belongs to the universal ribosomal protein uS15 family. In terms of assembly, part of the 30S ribosomal subunit. Forms a bridge to the 50S subunit in the 70S ribosome, contacting the 23S rRNA.

In terms of biological role, one of the primary rRNA binding proteins, it binds directly to 16S rRNA where it helps nucleate assembly of the platform of the 30S subunit by binding and bridging several RNA helices of the 16S rRNA. Functionally, forms an intersubunit bridge (bridge B4) with the 23S rRNA of the 50S subunit in the ribosome. This is Small ribosomal subunit protein uS15 from Edwardsiella ictaluri (strain 93-146).